The primary structure comprises 232 residues: Uracil phosphoribosyltransferase (232 aa).

Residue 38 to 42 (KGLVK) participates in GTP binding. Residues Arg-87, Arg-112, and 140 to 148 (DPMIATGST) each bind 5-phospho-alpha-D-ribose 1-diphosphate. Uracil contacts are provided by residues Ile-204 and 209–211 (GDA). Residue Asp-210 coordinates 5-phospho-alpha-D-ribose 1-diphosphate.

Belongs to the UPRTase family. Requires Mg(2+) as cofactor.

The enzyme catalyses UMP + diphosphate = 5-phospho-alpha-D-ribose 1-diphosphate + uracil. The protein operates within pyrimidine metabolism; UMP biosynthesis via salvage pathway; UMP from uracil: step 1/1. Allosterically activated by GTP. Functionally, catalyzes the conversion of uracil and 5-phospho-alpha-D-ribose 1-diphosphate (PRPP) to UMP and diphosphate. The polypeptide is Uracil phosphoribosyltransferase (Pyrococcus furiosus (strain ATCC 43587 / DSM 3638 / JCM 8422 / Vc1)).